We begin with the raw amino-acid sequence, 1024 residues long: Seizure 6-like protein (1024 aa).

A signal peptide spans 1–28 (MPAARPPAAGLRGISLFLALLLGSPAAA). The Extracellular portion of the chain corresponds to 29–958 (LERDALPEGD…ETSLEGGNMA (930 aa)). Disordered regions lie at residues 33 to 77 (ALPE…SQSA), 108 to 184 (RPKH…EVPL), and 212 to 234 (AHTL…EAPQ). Serine 49 carries an O-linked (GalNAc...) serine glycan. Over residues 56–66 (SPGKEHPEERV) the composition is skewed to basic and acidic residues. Residues 110 to 120 (KHALPPKKKLP) show a composition bias toward basic residues. The span at 138 to 162 (SAATVQRAGSQPASQGLDLLSSSTE) shows a compositional bias: polar residues. 2 O-glycosylated at one site regions span residues 147 to 161 (SQPA…SSST) and 176 to 180 (SEEAS). Cysteine 281 and cysteine 308 are joined by a disulfide. One can recognise a CUB 1 domain in the interval 281 to 389 (CSVSFSNPEG…GTFQLHYQAF (109 aa)). N-linked (GlcNAc...) asparagine glycans are attached at residues asparagine 311, asparagine 328, and asparagine 350. A Sushi 1 domain is found at 391-450 (LSCNFPRRPDSGDVTVMDLHSGGVAHFHCHLGYELQGAKMLTCINASKPHWSSQEPICSA). 2 cysteine pairs are disulfide-bonded: cysteine 393-cysteine 433 and cysteine 419-cysteine 448. N-linked (GlcNAc...) asparagine glycosylation is found at asparagine 435, asparagine 458, asparagine 474, asparagine 514, asparagine 576, asparagine 618, asparagine 674, and asparagine 742. The CUB 2 domain occupies 452-562 (CGGAVHNATI…STFNIRFEAF (111 aa)). The region spanning 565–626 (GHCYEPYIQN…WNDTEPLCRA (62 aa)) is the Sushi 2 domain. 2 disulfides stabilise this stretch: cysteine 567–cysteine 609 and cysteine 594–cysteine 624. The CUB 3 domain occupies 628-739 (CGGELSAVAG…QGFIMNYIEV (112 aa)). Sushi domains follow at residues 743-802 (DSCS…FCEK), 804-867 (MYCT…HCVS), and 871-932 (LACD…VCKV). 6 cysteine pairs are disulfide-bonded: cysteine 745/cysteine 787, cysteine 773/cysteine 800, cysteine 806/cysteine 848, cysteine 834/cysteine 865, cysteine 873/cysteine 915, and cysteine 901/cysteine 930. The chain crosses the membrane as a helical span at residues 959-979 (LAIFIPVLIISLLLGGAYIYI). The Cytoplasmic portion of the chain corresponds to 980–1024 (TRCRYYSNLRLPLMYSHPYSQITVETEFDNPIYETGETREYEVSI).

The protein belongs to the SEZ6 family. O-glycosylated. In terms of tissue distribution, widely expressed, including adult and fetal brains and lungs. Not expressed in all lung cancer cell lines.

Its subcellular location is the endoplasmic reticulum membrane. Its function is as follows. May contribute to specialized endoplasmic reticulum functions in neurons. This chain is Seizure 6-like protein (SEZ6L), found in Homo sapiens (Human).